The primary structure comprises 347 residues: Very-long-chain 3-oxoacyl-CoA reductase (347 aa).

Residues 20 to 40 (LLWVVFGLGVLKCTTLSLRFL) form a helical membrane-spanning segment. Val-66, Asp-120, Asn-147, Tyr-223, Lys-227, Val-256, and Ser-258 together coordinate NADP(+). Tyr-223 functions as the Proton donor in the catalytic mechanism. Catalysis depends on Lys-227, which acts as the Lowers pKa of active site Tyr.

This sequence belongs to the short-chain dehydrogenases/reductases (SDR) family. As to quaternary structure, interacts with the fatty acid elongation system components ELO3 and TSC13.

It localises to the endoplasmic reticulum membrane. The catalysed reaction is a very-long-chain (3R)-3-hydroxyacyl-CoA + NADP(+) = a very-long-chain 3-oxoacyl-CoA + NADPH + H(+). It participates in lipid metabolism; fatty acid biosynthesis. Functionally, component of the microsomal membrane bound fatty acid elongation system, which produces the 26-carbon very long-chain fatty acids (VLCFA) from palmitate. Catalyzes the reduction of the 3-ketoacyl-CoA intermediate that is formed in each cycle of fatty acid elongation. VLCFAs serve as precursors for ceramide and sphingolipids. This is Very-long-chain 3-oxoacyl-CoA reductase from Saccharomyces cerevisiae (strain RM11-1a) (Baker's yeast).